The following is a 513-amino-acid chain: Flavonoid 3',5'-hydroxylase (513 aa).

Cys-446 is a heme binding site.

It belongs to the cytochrome P450 family. Requires heme as cofactor. Hypocotyl tissues.

It catalyses the reaction a 3',5'-unsubstituted flavanone + 2 reduced [NADPH--hemoprotein reductase] + 2 O2 = a 3',5'-dihydroxyflavanone + 2 oxidized [NADPH--hemoprotein reductase] + 2 H2O + 2 H(+). The protein operates within pigment biosynthesis; anthocyanin biosynthesis. Its function is as follows. Catalyzes the 3'5'-hydroxylation of naringenin and eriodictyol to form 5,7,3,'4',5'-pentahydroxyflavanone and 3',5'-hydroxylation of dihydrokaempferol and dihydroquercetin to form dihydromyricetin. This chain is Flavonoid 3',5'-hydroxylase (CYP75A2), found in Solanum melongena (Eggplant).